The following is a 364-amino-acid chain: Tubulin alpha-2 chain (364 aa).

GTP contacts are provided by G59, T60, T94, N121, and N144. The active site involves E170.

It belongs to the tubulin family. As to quaternary structure, dimer of alpha and beta chains. A typical microtubule is a hollow water-filled tube with an outer diameter of 25 nm and an inner diameter of 15 nM. Alpha-beta heterodimers associate head-to-tail to form protofilaments running lengthwise along the microtubule wall with the beta-tubulin subunit facing the microtubule plus end conferring a structural polarity. Microtubules usually have 13 protofilaments but different protofilament numbers can be found in some organisms and specialized cells. Mg(2+) is required as a cofactor. In terms of processing, undergoes a tyrosination/detyrosination cycle, the cyclic removal and re-addition of a C-terminal tyrosine residue by the enzymes tubulin tyrosine carboxypeptidase (TTCP) and tubulin tyrosine ligase (TTL), respectively.

Its subcellular location is the cytoplasm. It is found in the cytoskeleton. The enzyme catalyses GTP + H2O = GDP + phosphate + H(+). Functionally, tubulin is the major constituent of microtubules, a cylinder consisting of laterally associated linear protofilaments composed of alpha- and beta-tubulin heterodimers. Microtubules grow by the addition of GTP-tubulin dimers to the microtubule end, where a stabilizing cap forms. Below the cap, tubulin dimers are in GDP-bound state, owing to GTPase activity of alpha-tubulin. The protein is Tubulin alpha-2 chain (TUBA2) of Anemia phyllitidis (Fern).